The sequence spans 193 residues: MAAGPALVLASASPRRLDLLAQVGVTPDRVDPADIDETPLRDETPRRHALRLALEKARVVAARAPGDFVLAADTVVAVGRRILPKAETEADVLYCLKLLSGRNHKVLTGVALIAPDGRAATRLVETKVGFKRLSDAERDGYVASGQWRGKAGGYGVQGLAGGFITDLQGSYPSVVGLPLYETLNLLSGLGYRP.

Asp-73 functions as the Proton acceptor in the catalytic mechanism.

This sequence belongs to the Maf family. YhdE subfamily. A divalent metal cation is required as a cofactor.

Its subcellular location is the cytoplasm. It catalyses the reaction dTTP + H2O = dTMP + diphosphate + H(+). The enzyme catalyses UTP + H2O = UMP + diphosphate + H(+). In terms of biological role, nucleoside triphosphate pyrophosphatase that hydrolyzes dTTP and UTP. May have a dual role in cell division arrest and in preventing the incorporation of modified nucleotides into cellular nucleic acids. This Caulobacter vibrioides (strain ATCC 19089 / CIP 103742 / CB 15) (Caulobacter crescentus) protein is dTTP/UTP pyrophosphatase.